We begin with the raw amino-acid sequence, 329 residues long: GTP 3',8-cyclase (329 aa).

Residues Ala-8–Ala-234 enclose the Radical SAM core domain. GTP is bound at residue Arg-17. [4Fe-4S] cluster-binding residues include Cys-24 and Cys-28. Tyr-30 is a binding site for S-adenosyl-L-methionine. Cys-31 serves as a coordination point for [4Fe-4S] cluster. GTP is bound at residue Arg-68. Residue Gly-72 participates in S-adenosyl-L-methionine binding. Thr-99 contributes to the GTP binding site. Residue Ser-123 coordinates S-adenosyl-L-methionine. Residue Lys-160 coordinates GTP. Residue Met-194 participates in S-adenosyl-L-methionine binding. Positions 257 and 260 each coordinate [4Fe-4S] cluster. Arg-262–Arg-264 provides a ligand contact to GTP. [4Fe-4S] cluster is bound at residue Cys-274.

The protein belongs to the radical SAM superfamily. MoaA family. In terms of assembly, monomer and homodimer. The cofactor is [4Fe-4S] cluster.

It catalyses the reaction GTP + AH2 + S-adenosyl-L-methionine = (8S)-3',8-cyclo-7,8-dihydroguanosine 5'-triphosphate + 5'-deoxyadenosine + L-methionine + A + H(+). It participates in cofactor biosynthesis; molybdopterin biosynthesis. Its function is as follows. Catalyzes the cyclization of GTP to (8S)-3',8-cyclo-7,8-dihydroguanosine 5'-triphosphate. The protein is GTP 3',8-cyclase of Escherichia coli O17:K52:H18 (strain UMN026 / ExPEC).